We begin with the raw amino-acid sequence, 318 residues long: Ribose-phosphate pyrophosphokinase 2 (318 aa).

An ATP-binding site is contributed by 96-101 (RQDKKD). 4 residues coordinate Mg(2+): Asp-128, His-130, Asp-139, and Asp-143. His-130 contributes to the ATP binding site. A binding of phosphoribosylpyrophosphate region spans residues 212-227 (KDRVAILVDDMADTCG).

The protein belongs to the ribose-phosphate pyrophosphokinase family. Homodimer. The active form is probably a hexamer composed of 3 homodimers. Requires Mg(2+) as cofactor.

The catalysed reaction is D-ribose 5-phosphate + ATP = 5-phospho-alpha-D-ribose 1-diphosphate + AMP + H(+). It functions in the pathway metabolic intermediate biosynthesis; 5-phospho-alpha-D-ribose 1-diphosphate biosynthesis; 5-phospho-alpha-D-ribose 1-diphosphate from D-ribose 5-phosphate (route I): step 1/1. Activated by magnesium and inorganic phosphate. In terms of biological role, catalyzes the synthesis of phosphoribosylpyrophosphate (PRPP) that is essential for nucleotide synthesis. The protein is Ribose-phosphate pyrophosphokinase 2 (Prps2) of Rattus norvegicus (Rat).